Here is a 405-residue protein sequence, read N- to C-terminus: Glucan 1,3-beta-glucosidase A (405 aa).

An N-terminal signal peptide occupies residues 1–14 (MLPLLLCIVPYCWS). Glutamate 199 (proton donor) is an active-site residue. 2 disulfide bridges follow: cysteine 280/cysteine 405 and cysteine 306/cysteine 332. Catalysis depends on glutamate 298, which acts as the Nucleophile.

This sequence belongs to the glycosyl hydrolase 5 (cellulase A) family. In terms of assembly, monomer. The cofactor is Mn(2+).

It is found in the secreted. It catalyses the reaction Successive hydrolysis of beta-D-glucose units from the non-reducing ends of (1-&gt;3)-beta-D-glucans, releasing alpha-glucose.. Functionally, beta-glucanases participate in the metabolism of beta-glucan, the main structural component of the cell wall. It could also function biosynthetically as a transglycosylase. The chain is Glucan 1,3-beta-glucosidase A (exgA) from Aspergillus oryzae (strain ATCC 42149 / RIB 40) (Yellow koji mold).